The primary structure comprises 162 residues: MRAPIPEPKPGDLIEIFRPFYRHWAIYVGDGYVVHLAPPSEVAGAGAASVMSALTDKAIVKKELLYDVAGSDKYQVNNKHDDKYSPLPCSKIIQRAEELVGQEVLYKLTSENCEHFVNELRYGVARSDQVRDVIIAASAAGMGLAAMSLIGVMFSRNKRQKQ.

The Cytoplasmic segment spans residues 1 to 133; it reads MRAPIPEPKP…VARSDQVRDV (133 aa). The LRAT domain maps to 13–129; the sequence is LIEIFRPFYR…LRYGVARSDQ (117 aa). Active-site residues include His-23 and His-35. Cys-113 serves as the catalytic Acyl-thioester intermediate. Residues 134-154 traverse the membrane as a helical segment; sequence IIAASAAGMGLAAMSLIGVMF. The Lumenal segment spans residues 155 to 162; the sequence is SRNKRQKQ.

Belongs to the H-rev107 family. Interacts with PPP2R1A; this interaction might decrease PP2A activity.

It localises to the cell membrane. It is found in the cytoplasm. The protein localises to the cytosol. Its subcellular location is the perinuclear region. The protein resides in the peroxisome membrane. It localises to the mitochondrion membrane. It is found in the nucleus envelope. The protein localises to the lysosome membrane. Its subcellular location is the endoplasmic reticulum membrane. The catalysed reaction is a 1,2-diacyl-sn-glycero-3-phosphocholine + H2O = a 1-acyl-sn-glycero-3-phosphocholine + a fatty acid + H(+). It catalyses the reaction a 1,2-diacyl-sn-glycero-3-phosphocholine + H2O = a 2-acyl-sn-glycero-3-phosphocholine + a fatty acid + H(+). The enzyme catalyses 1,2-dihexadecanoyl-sn-glycero-3-phosphocholine + H2O = 1-hexadecanoyl-sn-glycero-3-phosphocholine + hexadecanoate + H(+). It carries out the reaction 1,2-dihexadecanoyl-sn-glycero-3-phosphocholine + H2O = 2-hexadecanoyl-sn-glycero-3-phosphocholine + hexadecanoate + H(+). The catalysed reaction is 1-hexadecanoyl-2-(9Z-octadecenoyl)-sn-glycero-3-phosphocholine + H2O = 2-(9Z-octadecenoyl)-sn-glycero-3-phosphocholine + hexadecanoate + H(+). It catalyses the reaction 1-hexadecanoyl-2-(9Z-octadecenoyl)-sn-glycero-3-phosphocholine + H2O = 1-hexadecanoyl-sn-glycero-3-phosphocholine + (9Z)-octadecenoate + H(+). The enzyme catalyses 1-hexadecanoyl-2-(5Z,8Z,11Z,14Z-eicosatetraenoyl)-sn-glycero-3-phosphocholine + H2O = 1-hexadecanoyl-sn-glycero-3-phosphocholine + (5Z,8Z,11Z,14Z)-eicosatetraenoate + H(+). It carries out the reaction 1-hexadecanoyl-2-(5Z,8Z,11Z,14Z-eicosatetraenoyl)-sn-glycero-3-phosphocholine + H2O = 2-(5Z,8Z,11Z,14Z)-eicosatetraenoyl-sn-glycero-3-phosphocholine + hexadecanoate + H(+). The catalysed reaction is 1-hexadecanoyl-2-(9Z,12Z-octadecadienoyl)-sn-glycero-3-phosphoethanolamine + H2O = 1-hexadecanoyl-sn-glycero-3-phosphoethanolamine + (9Z,12Z)-octadecadienoate + H(+). It catalyses the reaction 1-hexadecanoyl-2-(9Z,12Z-octadecadienoyl)-sn-glycero-3-phosphoethanolamine + H2O = 2-(9Z,12Z)-octadecadienoyl-sn-glycero-3-phosphoethanolamine + hexadecanoate + H(+). The enzyme catalyses 1-hexadecanoyl-2-(5Z,8Z,11Z,14Z-eicosatetraenoyl)-sn-glycero-3-phosphoethanolamine + H2O = 1-hexadecanoyl-sn-glycero-3-phosphoethanolamine + (5Z,8Z,11Z,14Z)-eicosatetraenoate + H(+). It carries out the reaction 1-hexadecanoyl-2-(5Z,8Z,11Z,14Z-eicosatetraenoyl)-sn-glycero-3-phosphoethanolamine + H2O = 2-(5Z,8Z,11Z,14Z)-eicosatetraenoyl-sn-glycero-3-phosphoethanolamine + hexadecanoate + H(+). The catalysed reaction is 1-hexanoyl-2-acyl-sn-glycero-3-phosphocholine + H2O = hexanoate + a 2-acyl-sn-glycero-3-phosphocholine + H(+). It catalyses the reaction 1-hexanoyl-2-acyl-sn-glycero-3-phosphocholine + H2O = 1-hexanoyl-sn-glycero-3-phosphocholine + a fatty acid + H(+). The enzyme catalyses 1,2-diheptadecanoyl-sn-glycero-3-phosphoethanolamine + 1-(9Z-octadecenoyl)-2-hexadecanoyl-sn-glycero-3-phosphocholine = 1,2-diheptadecanoyl-sn-glycero-3-phospho-N-hexadecanoyl-ethanolamine + 1-(9Z-octadecenoyl)-sn-glycero-3-phosphocholine + H(+). It carries out the reaction 1,2-diheptadecanoyl-sn-glycero-3-phosphoethanolamine + 1-(9Z-octadecenoyl)-2-hexadecanoyl-sn-glycero-3-phosphocholine = 1,2-diheptadecanoyl-sn-glycero-3-phospho-N-(9Z-octadecenoyl)-ethanolamine + 2-hexadecanoyl-sn-glycero-3-phosphocholine + H(+). The catalysed reaction is 1,2-dihexanoyl-sn-glycero-3-phosphoethanolamine + 2-heptanoyl-sn-glycero-3-phosphocholine = hexanoyl-sn-glycero-3-phosphoethanolamine + 1-hexanoyl-2-heptanoyl-sn-glycero-3-phosphocholine. It catalyses the reaction 1-hexadecanoyl-2-octadecanoyl-sn-glycero-3-phosphocholine + H2O = octadecanoate + 1-hexadecanoyl-sn-glycero-3-phosphocholine + H(+). The enzyme catalyses 1-hexadecanoyl-2-octadecanoyl-sn-glycero-3-phosphocholine + H2O = 2-octadecanoyl-sn-glycero-3-phosphocholine + hexadecanoate + H(+). It carries out the reaction 1-octadecanoyl-2-hexadecanoyl-sn-glycero-3-phosphocholine + H2O = 1-octadecanoyl-sn-glycero-3-phosphocholine + hexadecanoate + H(+). The catalysed reaction is 1-octadecanoyl-2-hexadecanoyl-sn-glycero-3-phosphocholine + H2O = 2-hexadecanoyl-sn-glycero-3-phosphocholine + octadecanoate + H(+). It catalyses the reaction 1-hexadecanoyl-2-(9Z,12Z-octadecadienoyl)-sn-glycero-3-phosphocholine + H2O = (9Z,12Z)-octadecadienoate + 1-hexadecanoyl-sn-glycero-3-phosphocholine + H(+). The enzyme catalyses 1-hexadecanoyl-2-(9Z,12Z-octadecadienoyl)-sn-glycero-3-phosphocholine + H2O = 2-(9Z,12Z-octadecadienoyl)-sn-glycero-3-phosphocholine + hexadecanoate + H(+). It carries out the reaction 1,2-di-(9Z-octadecenoyl)-sn-glycero-3-phosphocholine + H2O = 2-(9Z-octadecenoyl)-sn-glycero-3-phosphocholine + (9Z)-octadecenoate + H(+). The catalysed reaction is 1,2-dihexadecanoyl-sn-glycero-3-phosphocholine + H2O = hexadecanoyl-sn-glycero-3-phosphocholine + hexadecanoate + H(+). It catalyses the reaction 1,2-di-(9Z-octadecenoyl)-sn-glycero-3-phosphocholine + H2O = 1-(9Z-octadecenoyl)-sn-glycero-3-phosphocholine + (9Z)-octadecenoate + H(+). The enzyme catalyses 1,2-di-(9Z-octadecenoyl)-sn-glycero-3-phosphoethanolamine + 1,2-dihexadecanoyl-sn-glycero-3-phosphocholine = hexadecanoyl-sn-glycero-3-phosphocholine + N-hexadecanoyl-1,2-di-(9Z-octadecenoyl)-sn-glycero-3-phosphoethanolamine + H(+). It carries out the reaction 1,2-di-(9Z,12Z-octadecadienoyl)-sn-glycero-3-phosphocholine + H2O = 1-(9Z,12Z)-octadecadienoyl-sn-glycero-3-phosphocholine + (9Z,12Z)-octadecadienoate + H(+). Functionally, exhibits both phospholipase A1/2 and acyltransferase activities. Shows phospholipase A1 (PLA1) and A2 (PLA2), catalyzing the calcium-independent release of fatty acids from the sn-1 or sn-2 position of glycerophospholipids. For most substrates, PLA1 activity is much higher than PLA2 activity. Shows O-acyltransferase activity, catalyzing the transfer of a fatty acyl group from glycerophospholipid to the hydroxyl group of lysophospholipid. Shows N-acyltransferase activity, catalyzing the calcium-independent transfer of a fatty acyl group at the sn-1 position of phosphatidylcholine (PC) and other glycerophospholipids to the primary amine of phosphatidylethanolamine (PE), forming N-acylphosphatidylethanolamine (NAPE), which serves as precursor for N-acylethanolamines (NAEs). Exhibits high N-acyltransferase activity and low phospholipase A1/2 activity. Required for complete organelle rupture and degradation that occur during eye lens terminal differentiation, when fiber cells that compose the lens degrade all membrane-bound organelles in order to provide lens with transparency to allow the passage of light. Organelle membrane degradation is probably catalyzed by the phospholipase activity. Plays a role in phospholipid metabolism and adipogenesis. This chain is Phospholipase A and acyltransferase 3, found in Pongo abelii (Sumatran orangutan).